The sequence spans 564 residues: MFGVYFVLLFLSSALIHVANAGSNAEWRKRIIYQILTDRFAVDDGSTDNPCDPDANQYCGGTWKGIENKLDYIEDMGFNAIWISPIDKNIEGDIDGAGYAYHGYWNTDYESLNEHFGTEDDLVSLITAAHKAGIWVMLDSIVNSMALAPPLADADYSSLNPFNKESYFHPYCLIDWDITDNETNVMDCWQDSGVLLADLDVESSDVSSYLSDHFKSLISKYDFDGLRIDAVKMMNYTFFPDFVDATGVYSVGEVFSYDPDTMCSYMSVLPGVTNYFLQLYINFSFTATGAGFTLIPTYQEVMASNCSKYDSTLMLTFIENHDLYRFPYYTSDQSQIMGALSFVLIWDGIPSIFYGQEQGFNGGEDPANRPALWLTDYDQSNPYYTVIKTMVAFRKFVITQDPDWVTSTYQSIESAVDHYVGQKNDVLVMFNNMGVTNNLTIYEVETNYTANEVVSDVFGHRTLTVGADKTLTASMTNGYPLIMYPHSKMSGFTLPTVNRTVMPSTSATATTTVYTSYYSPSYSARSFTGTGSIFTISSSSRLILSFKTLVFGLGVTAMLFVLFF.

Residues 1–21 (MFGVYFVLLFLSSALIHVANA) form the signal peptide. A disulfide bridge links C51 with C59. Residues N56 and W105 each contribute to the substrate site. A Ca(2+)-binding site is contributed by N143. Cysteines 172 and 188 form a disulfide. N181 carries N-linked (GlcNAc...) asparagine glycosylation. A Ca(2+)-binding site is contributed by D198. Residue R227 participates in substrate binding. Position 229 (D229) interacts with Ca(2+). The active-site Nucleophile is D229. 232-233 (KM) contributes to the substrate binding site. N235 carries an N-linked (GlcNAc...) asparagine glycan. E253 provides a ligand contact to Ca(2+). The active-site Proton donor is the E253. The cysteines at positions 263 and 306 are disulfide-linked. 2 N-linked (GlcNAc...) asparagine glycosylation sites follow: N282 and N305. Residues D322 and R369 each coordinate substrate. N-linked (GlcNAc...) asparagine glycans are attached at residues N438, N447, and N498. S538 carries the GPI-anchor amidated serine lipid modification. Residues 539–564 (SSRLILSFKTLVFGLGVTAMLFVLFF) constitute a propeptide, removed in mature form.

Belongs to the glycosyl hydrolase 13 family. Ca(2+) serves as cofactor. In terms of processing, N-glycosylated.

Its subcellular location is the cell membrane. The catalysed reaction is Endohydrolysis of (1-&gt;4)-alpha-D-glucosidic linkages in polysaccharides containing three or more (1-&gt;4)-alpha-linked D-glucose units.. In terms of biological role, has a role in cell wall biosynthesis where it is involved in maintaining cell wall strength and shape. This Schizosaccharomyces pombe (strain 972 / ATCC 24843) (Fission yeast) protein is Alpha-amylase 3 (aah3).